Consider the following 612-residue polypeptide: Protein cereblon (612 aa).

Positions 1 to 11 are enriched in acidic residues; that stretch reads MDDEETAEIED. 3 disordered regions span residues 1 to 30, 58 to 133, and 181 to 211; these read MDDE…GASA, MELI…NPHP, and QERR…PYDV. Over residues 69–81 the composition is skewed to low complexity; sequence AADAPDAAASTGS. Positions 181–190 are enriched in basic and acidic residues; sequence QERRRSRTSE. Residues 250 to 478 form the Lon N-terminal domain; sequence HMLIFLHQHI…IIGSTLKDES (229 aa). A CULT domain is found at 477–586; sequence ESVFYCRYCN…LAGSSVRIGK (110 aa). Zn(2+) is bound by residues Cys-482, Cys-485, Cys-551, and Cys-554.

It belongs to the CRBN family. In terms of assembly, likely a component of a DCX (DDB1-CUL4-X-box) protein ligase complex. May interact with pic/DDB1. Ubiquitinated.

The protein localises to the nucleus. The protein operates within protein modification; protein ubiquitination. Substrate recognition component of a DCX (DDB1-CUL4-X-box) E3 protein ligase complex that mediates the ubiquitination and subsequent proteasomal degradation of target proteins. Has an essential role in mediating growth by negatively regulating insulin signaling. It also has a role in maintaining presynaptic function in the neuromuscular junction synapses of third-instar larvae. This Drosophila willistoni (Fruit fly) protein is Protein cereblon.